The following is a 166-amino-acid chain: Phospholipase A2 inhibitor clone 06/08 (166 aa).

The signal sequence occupies residues M1–G19. A C-type lectin domain is found at L46 to E161. N-linked (GlcNAc...) asparagine glycosylation is found at N61 and N122. 2 disulfide bridges follow: C83–C160 and C138–C152.

Belongs to the alpha-type phospholipase A2 inhibitor family. In terms of assembly, homotrimer; non-covalently linked. In terms of tissue distribution, expressed by the liver.

The protein localises to the secreted. This phospholipase A2 inhibitor binds directly phospholipase A2 in the presence or absence of calcium. The polypeptide is Phospholipase A2 inhibitor clone 06/08 (Bothrops neuwiedi (Neuwied's lancehead)).